The primary structure comprises 216 residues: Probable transaldolase (216 aa).

The active-site Schiff-base intermediate with substrate is the lysine 83.

Belongs to the transaldolase family. Type 3B subfamily.

The protein resides in the cytoplasm. It carries out the reaction D-sedoheptulose 7-phosphate + D-glyceraldehyde 3-phosphate = D-erythrose 4-phosphate + beta-D-fructose 6-phosphate. It functions in the pathway carbohydrate degradation; pentose phosphate pathway; D-glyceraldehyde 3-phosphate and beta-D-fructose 6-phosphate from D-ribose 5-phosphate and D-xylulose 5-phosphate (non-oxidative stage): step 2/3. In terms of biological role, transaldolase is important for the balance of metabolites in the pentose-phosphate pathway. In Thermoanaerobacter sp. (strain X514), this protein is Probable transaldolase.